Reading from the N-terminus, the 1258-residue chain is Splicing factor, arginine/serine-rich 19 (1258 aa).

Disordered stretches follow at residues 1–32, 159–345, 370–398, 410–1034, 1114–1154, and 1223–1258; these read MEEE…LSPS, KTVS…PRRR, GGPA…EEEP, PRQP…PPPM, GSLP…DKYL, and FRKH…LPPL. The segment covering 7–27 has biased composition (basic and acidic residues); the sequence is SRGKTEESGEDRGDGPPDRDP. The span at 193–207 shows a compositional bias: low complexity; sequence SSASSSPSPSPSSSS. Residues 208 to 223 show a composition bias toward pro residues; the sequence is PSPPPPPPPPPPPALP. The span at 228-237 shows a compositional bias: basic and acidic residues; sequence DIYDPFHPTD. Serine 241 carries the phosphoserine modification. The segment covering 256–266 has biased composition (polar residues); sequence TGSNPSSSAGT. Residues 269–283 show a composition bias toward acidic residues; it reads PEEEEEEEEEEEEEG. The residue at position 329 (threonine 329) is a Phosphothreonine. Residues 374-383 are compositionally biased toward pro residues; sequence LPLPPLPPTD. A compositionally biased stretch (acidic residues) spans 384–395; it reads PEIEEGEIVQPE. Over residues 414–426 the composition is skewed to low complexity; it reads PASVATLASVAAP. Phosphoserine occurs at positions 444 and 449. A compositionally biased stretch (basic residues) spans 480-491; the sequence is KILTQRRERYRQ. 4 positions are modified to phosphoserine: serine 493, serine 495, serine 512, and serine 520. Basic residues-rich tracts occupy residues 540-555 and 562-579; these read TARR…RSRS and RGSH…RRRS. Serine 579 and serine 581 each carry phosphoserine. A compositionally biased stretch (basic residues) spans 594–613; it reads RERHRGKRREGGKKKKKRSR. The segment covering 614 to 625 has biased composition (basic and acidic residues); it reads SRAEKRSGDLEK. A Phosphothreonine modification is found at threonine 665. Serine 678 and serine 684 each carry phosphoserine. Phosphotyrosine is present on tyrosine 691. A phosphoserine mark is found at serine 693 and serine 697. 2 stretches are compositionally biased toward basic and acidic residues: residues 698 to 711 and 721 to 743; these read ADER…DRRR and SREK…DRSS. Composition is skewed to low complexity over residues 752-777 and 795-806; these read SAPG…SCSS and SSTTPAKDSSSS. Lysine 814 is covalently cross-linked (Glycyl lysine isopeptide (Lys-Gly) (interchain with G-Cter in SUMO2)). Over residues 815–833 the composition is skewed to basic and acidic residues; that stretch reads FSRDRESRSPFLKPDERAP. A phosphoserine mark is found at serine 821 and serine 823. Residues 845-877 show a composition bias toward basic residues; it reads KPKKTKAKAKAGAKKAKGTKGKTKPSKTRKKVR. Serine 878, serine 885, serine 912, and serine 914 each carry phosphoserine. Positions 924-937 are enriched in pro residues; sequence STPPPKVAPPPPAL. Threonine 925 and threonine 938 each carry phosphothreonine. Residues 940 to 949 are compositionally biased toward polar residues; sequence DSQTVDSSCK. Residue serine 941 is modified to Phosphoserine. Residue threonine 950 is modified to Phosphothreonine. Positions 971-986 are enriched in acidic residues; the sequence is EEEEEEEEEEEEEEEQ. Positions 987 to 1019 are enriched in low complexity; it reads QPATTTATSTAAAAPSTAPSAGSTAGDSGAEDG. A necessary for interaction with the CTD domain of POLR2A region spans residues 1133–1258; the sequence is PASDKREGSS…GGPGLPLPPL (126 aa). Residues 1135 to 1154 show a composition bias toward basic and acidic residues; it reads SDKREGSSSSEGRGDTDKYL. Residues 1246-1258 are compositionally biased toward pro residues; it reads PDKGGPGLPLPPL.

It belongs to the splicing factor SR family. Interacts with POLR2A.

It localises to the nucleus. Functionally, may function in pre-mRNA splicing. The sequence is that of Splicing factor, arginine/serine-rich 19 (Scaf1) from Rattus norvegicus (Rat).